Reading from the N-terminus, the 588-residue chain is MVTPVTWMDNPIEIYVNDSVWVPGPIDDRCPAKPEEEGMMINISIGYRYPPICLGRAPGCLMPAVQNWLVEVPTVSPISRFTYHMVSGMSLRPRVNYLQDFSYQRSLKFRPKGKPCPKEIPKESKNTEVLVWEECVANSAVILQNNEFGTIIDWAPRGQFYHNCSGQTQSCPSAQVSPAVDSDLTESLDKHKHKKLQSFYPWEWGEKRISTPRPKIVSPVSGPEHPELWRLTVASHHIRIWSGNQTLETRDCKPFYTIDLNSSLTVPLQSCVKPPYMLVVGNIVIKPDSQTITCENCRLLSCIDSTFNWQHRILLVRAREGVWIPVSMDRPWEASPSVHILTEVLKGVLNRSKRFIFTLIAVIMGLIAVTATAAVAGVALHSSVQSVNFVNDWQKNSTRLWNSQSSIDQKLANQINDLRQTVIWMGDRLMSLEHRFQLQCDWNTSDFCITPQIYNESEHHWDMVRRHLQGREDNLTLDISKLKEQIFEASKAHLNLVPGTEAIAGVADGLANLNPVTWVKTIGSTTIINLILILVCLFCLLLVCRCTQQLRRDSDHRERAMMTMAVLSKRKGGNVGKSKRDQIVTVSV.

The segment at 355–375 is fusion peptide; sequence FIFTLIAVIMGLIAVTATAAV. A helical transmembrane segment spans residues 522–542; that stretch reads IGSTTIINLILILVCLFCLLL.

Belongs to the beta type-B retroviral envelope protein family. HERV class-II K(HML-2) env subfamily. As to quaternary structure, the surface (SU) and transmembrane (TM) proteins form a heterodimer. SU and TM are attached by noncovalent interactions or by a labile interchain disulfide bond. In terms of processing, specific enzymatic cleavages in vivo yield the mature SU and TM proteins. In terms of tissue distribution, expressed in lung, placenta, testis and peripheral blood lymphocytes.

The protein localises to the virion. Its subcellular location is the cell membrane. Functionally, retroviral envelope proteins mediate receptor recognition and membrane fusion during early infection. Endogenous envelope proteins may have kept, lost or modified their original function during evolution. SU mediates receptor recognition. In terms of biological role, TM anchors the envelope heterodimer to the viral membrane through one transmembrane domain. The other hydrophobic domain, called fusion peptide, mediates fusion of the viral membrane with the target cell membrane. This chain is Endogenous retrovirus group K member 7 Env polyprotein (ERVK-7), found in Homo sapiens (Human).